Here is a 78-residue protein sequence, read N- to C-terminus: Large ribosomal subunit protein bL28 (78 aa).

Residues 1–21 form a disordered region; it reads MSRVCQVTGKRPVSGNNRSHA.

The protein belongs to the bacterial ribosomal protein bL28 family.

The polypeptide is Large ribosomal subunit protein bL28 (Sodalis glossinidius (strain morsitans)).